The primary structure comprises 246 residues: MVWRFQKHIGKGSSQERPIRKDFLTGTAGRDGDRGWGKWWGTALNFPKDPKGSAEGSAPTPLTEGSLPTVGNAPETQPTRRRGAGQRHCNQKPKAGRHFQTLGQPLVGTPPSPQDAAPRQGSPGPGPARTTAVWRPAPSGAAAEHGQKPQTPSASLQPPFPPPPPPGDPTPPSPLPPAHVPPTLLTLQEPVTGEGTSFRVEGLCASRLAVGRGLGALAANTSAPAAGSPLAAAAAAAAAVSSSKFP.

Composition is skewed to basic residues over residues 1–10 and 79–97; these read MVWRFQKHIG and TRRR…KAGR. A disordered region spans residues 1–184; that stretch reads MVWRFQKHIG…LPPAHVPPTL (184 aa). Pro residues predominate over residues 158 to 180; the sequence is PPFPPPPPPGDPTPPSPLPPAHV.

This is an uncharacterized protein from Homo sapiens (Human).